A 450-amino-acid polypeptide reads, in one-letter code: Involucrin (450 aa).

Polar residues predominate over residues 1-19; the sequence is MSQQHTLPVTLPPTLSQEL. Disordered regions lie at residues 1–43, 77–370, and 422–450; these read MSQQ…LPAP, QLQQ…EQLK, and PGQV…EPEV. Positions 86–108 are enriched in basic and acidic residues; that stretch reads QEVHLAKHQELQELQEQELHLGK. Positions 120 to 135 are enriched in low complexity; it reads GKQQQQQESQEQELYL. Basic and acidic residues-rich tracts occupy residues 187-200 and 264-281; these read LGKR…ELHL and QELH…ELHL. The span at 295–344 shows a compositional bias: low complexity; it reads GEAAAAGVTGAGPAASKAARRATGAGTAPGKAAAAAGATGAGTAATAPAT. Over residues 345–370 the composition is skewed to basic and acidic residues; the sequence is AEERQKAESLEQQLEQEKAQREEQLK.

This sequence belongs to the involucrin family. In terms of assembly, directly or indirectly cross-linked to cornifelin (CNFN). Substrate of transglutaminase. Specific glutamines or lysines are cross-linked to keratins, desmoplakin and to inter involucrin molecules. In terms of tissue distribution, keratinocytes of epidermis and other stratified squamous epithelia.

The protein resides in the cytoplasm. Part of the insoluble cornified cell envelope (CE) of stratified squamous epithelia. The chain is Involucrin (IVL) from Lemur catta (Ring-tailed lemur).